The sequence spans 308 residues: Porphobilinogen deaminase (308 aa).

Residue Cys-241 is modified to S-(dipyrrolylmethanemethyl)cysteine.

It belongs to the HMBS family. Monomer. Dipyrromethane is required as a cofactor.

It catalyses the reaction 4 porphobilinogen + H2O = hydroxymethylbilane + 4 NH4(+). It functions in the pathway porphyrin-containing compound metabolism; protoporphyrin-IX biosynthesis; coproporphyrinogen-III from 5-aminolevulinate: step 2/4. Tetrapolymerization of the monopyrrole PBG into the hydroxymethylbilane pre-uroporphyrinogen in several discrete steps. The chain is Porphobilinogen deaminase from Staphylococcus aureus (strain Newman).